The sequence spans 379 residues: Putative zinc metalloprotease BMEI0829 (379 aa).

His33 provides a ligand contact to Zn(2+). Glu34 is a catalytic residue. Position 37 (His37) interacts with Zn(2+). A run of 4 helical transmembrane segments spans residues 39 to 61 (LVARWCGIGAQAFSIGFGPELLG), 122 to 144 (VFAGPAFNIILTIAIFSVFFALY), 305 to 327 (FDWLIQLMAMLSIGIGLLNLFPL), and 355 to 377 (IFYRIGFLLVMGFMGFVLFNDLF). In terms of domain architecture, PDZ spans 133-208 (TIAIFSVFFA…LNFTVERDGK (76 aa)).

The protein belongs to the peptidase M50B family. Zn(2+) serves as cofactor.

The protein resides in the cell inner membrane. In Brucella melitensis biotype 1 (strain ATCC 23456 / CCUG 17765 / NCTC 10094 / 16M), this protein is Putative zinc metalloprotease BMEI0829.